The chain runs to 229 residues: 2,3-bisphosphoglycerate-dependent phosphoglycerate mutase (229 aa).

Substrate contacts are provided by residues 8–15 (RHGESAWN), 21–22 (TG), R60, 87–90 (ERHY), K98, 114–115 (RR), and 183–184 (GN). H9 serves as the catalytic Tele-phosphohistidine intermediate. E87 serves as the catalytic Proton donor/acceptor.

Belongs to the phosphoglycerate mutase family. BPG-dependent PGAM subfamily. In terms of assembly, homodimer.

It carries out the reaction (2R)-2-phosphoglycerate = (2R)-3-phosphoglycerate. It functions in the pathway carbohydrate degradation; glycolysis; pyruvate from D-glyceraldehyde 3-phosphate: step 3/5. In terms of biological role, catalyzes the interconversion of 2-phosphoglycerate and 3-phosphoglycerate. This chain is 2,3-bisphosphoglycerate-dependent phosphoglycerate mutase, found in Polynucleobacter asymbioticus (strain DSM 18221 / CIP 109841 / QLW-P1DMWA-1) (Polynucleobacter necessarius subsp. asymbioticus).